We begin with the raw amino-acid sequence, 594 residues long: Aspartate--tRNA(Asp/Asn) ligase (594 aa).

An L-aspartate-binding site is contributed by glutamate 175. The interval 199 to 202 is aspartate; it reads QLFK. Arginine 221 is an L-aspartate binding site. ATP is bound by residues 221-223 and glutamine 230; that span reads RDE. Histidine 446 serves as a coordination point for L-aspartate. Glutamate 492 contributes to the ATP binding site. Residue arginine 499 participates in L-aspartate binding. 544 to 547 lines the ATP pocket; the sequence is GFDR.

Belongs to the class-II aminoacyl-tRNA synthetase family. Type 1 subfamily. Homodimer.

Its subcellular location is the cytoplasm. It catalyses the reaction tRNA(Asx) + L-aspartate + ATP = L-aspartyl-tRNA(Asx) + AMP + diphosphate. Its function is as follows. Aspartyl-tRNA synthetase with relaxed tRNA specificity since it is able to aspartylate not only its cognate tRNA(Asp) but also tRNA(Asn). Reaction proceeds in two steps: L-aspartate is first activated by ATP to form Asp-AMP and then transferred to the acceptor end of tRNA(Asp/Asn). The polypeptide is Aspartate--tRNA(Asp/Asn) ligase (Hydrogenobaculum sp. (strain Y04AAS1)).